A 192-amino-acid polypeptide reads, in one-letter code: dTDP-4-amino-4,6-dideoxy-D-glucose acyltransferase (192 aa).

The protein belongs to the transferase hexapeptide repeat family.

The catalysed reaction is dTDP-4-amino-4,6-dideoxy-alpha-D-glucose + acetyl-CoA = dTDP-4-acetamido-4,6-dideoxy-alpha-D-glucose + CoA + H(+). Its pathway is bacterial outer membrane biogenesis; lipopolysaccharide biosynthesis. Functionally, catalyzes the conversion of dTDP-4-amino-4,6-dideoxy-D-glucose (dTDP-D-Qui4N) to dTDP-4-acetamido-4,6-dideoxy-D-glucose (dTDP-D-Qui4NAc). The chain is dTDP-4-amino-4,6-dideoxy-D-glucose acyltransferase (vioB) from Escherichia coli.